A 1081-amino-acid polypeptide reads, in one-letter code: Protein QUIRKY (1081 aa).

A C2 1 domain is found at 1–124 (MNTTPFHSDP…SRRGEEGLVY (124 aa)). Disordered stretches follow at residues 154–198 (DTAG…MNIP) and 238–323 (PQHV…MEKK). Over residues 163-176 (QQQQQQQQFHPPQQ) the composition is skewed to low complexity. Over residues 248–257 (NHPHRNDNHP) the composition is skewed to basic and acidic residues. Residues 258-268 (QRPPSPPPPPS) show a composition bias toward pro residues. C2 domains follow at residues 318–440 (TTME…PQWY), 477–605 (SSDA…SKWH), and 652–778 (VCSD…TNSY). Ca(2+) is bound by residues E351, S352, D408, and S413. A run of 3 helical transmembrane segments spans residues 879–899 (WYRIVGVLAWAVGLAKWLDNI), 916–936 (LVLVWYPDLVVPTAFLYVVMI), and 1024–1044 (LFIAICLVITIVLYAVPAKMV).

Belongs to the MCTP family. Interacts with SUB/SCM and POQ at the plasma membrane. Binds to SUB/SCM at plasmodesmata (PD) in root epidermal cells to promote tissue morphogenesis. Requires Ca(2+) as cofactor. Observed mainly in flowers, and, to a lower extent, in seedlings, roots, shoots, leaves, stems and inflorescences. Expressed in the vascular tissues of roots, cotyledons and rosette leaves. Accumulates in roots meristems.

It localises to the cell membrane. Its subcellular location is the cytoplasm. It is found in the golgi apparatus membrane. The protein resides in the cell junction. The protein localises to the plasmodesma. Functionally, may be involved in Ca 2(+)-dependent signaling and membrane trafficking. Plays a role in fruit dehiscence. Components of the machinery involved in organ development mediated by the receptor-like kinase STRUBBELIG (SUB). Collaboratively with SUB and POQ, regulates cell growth anisotropy during gynoecium development, thus linking together cell-cell communication and cellular growth. Together with SUB/SCM, links RLK-dependent signal transduction and intercellular communication mediated by plasmodesmata (PD) to regulate tissue morphogenesis. May function as a signaling molecule by regulating the trafficking of other regulators. The polypeptide is Protein QUIRKY (Arabidopsis thaliana (Mouse-ear cress)).